The primary structure comprises 403 residues: 4-hydroxy-3-methylbut-2-enyl diphosphate reductase (403 aa).

Cysteine 66 lines the [4Fe-4S] cluster pocket. Position 96 (histidine 96) interacts with (2E)-4-hydroxy-3-methylbut-2-enyl diphosphate. Histidine 96 lines the dimethylallyl diphosphate pocket. An isopentenyl diphosphate-binding site is contributed by histidine 96. Cysteine 157 is a [4Fe-4S] cluster binding site. (2E)-4-hydroxy-3-methylbut-2-enyl diphosphate is bound at residue histidine 185. Residue histidine 185 participates in dimethylallyl diphosphate binding. Histidine 185 is a binding site for isopentenyl diphosphate. Glutamate 187 acts as the Proton donor in catalysis. A (2E)-4-hydroxy-3-methylbut-2-enyl diphosphate-binding site is contributed by threonine 250. Cysteine 288 lines the [4Fe-4S] cluster pocket. (2E)-4-hydroxy-3-methylbut-2-enyl diphosphate contacts are provided by serine 317, serine 318, asparagine 319, and serine 379. Serine 317, serine 318, asparagine 319, and serine 379 together coordinate dimethylallyl diphosphate. Residues serine 317, serine 318, asparagine 319, and serine 379 each contribute to the isopentenyl diphosphate site.

It belongs to the IspH family. The cofactor is [4Fe-4S] cluster.

The catalysed reaction is isopentenyl diphosphate + 2 oxidized [2Fe-2S]-[ferredoxin] + H2O = (2E)-4-hydroxy-3-methylbut-2-enyl diphosphate + 2 reduced [2Fe-2S]-[ferredoxin] + 2 H(+). It carries out the reaction dimethylallyl diphosphate + 2 oxidized [2Fe-2S]-[ferredoxin] + H2O = (2E)-4-hydroxy-3-methylbut-2-enyl diphosphate + 2 reduced [2Fe-2S]-[ferredoxin] + 2 H(+). It participates in isoprenoid biosynthesis; dimethylallyl diphosphate biosynthesis; dimethylallyl diphosphate from (2E)-4-hydroxy-3-methylbutenyl diphosphate: step 1/1. The protein operates within isoprenoid biosynthesis; isopentenyl diphosphate biosynthesis via DXP pathway; isopentenyl diphosphate from 1-deoxy-D-xylulose 5-phosphate: step 6/6. Catalyzes the conversion of 1-hydroxy-2-methyl-2-(E)-butenyl 4-diphosphate (HMBPP) into a mixture of isopentenyl diphosphate (IPP) and dimethylallyl diphosphate (DMAPP). Acts in the terminal step of the DOXP/MEP pathway for isoprenoid precursor biosynthesis. The protein is 4-hydroxy-3-methylbut-2-enyl diphosphate reductase of Picosynechococcus sp. (strain ATCC 27264 / PCC 7002 / PR-6) (Agmenellum quadruplicatum).